A 334-amino-acid polypeptide reads, in one-letter code: Holliday junction branch migration complex subunit RuvB (334 aa).

A large ATPase domain (RuvB-L) region spans residues 1 to 182 (MDDRMIDGEL…FGVLSRLEYY (182 aa)). Residues L21, R22, G63, K66, T67, T68, 129–131 (EDF), R172, Y182, and R219 contribute to the ATP site. Residue T67 participates in Mg(2+) binding. The segment at 183–253 (EIKDLCNIVE…STKQALEMLQ (71 aa)) is small ATPAse domain (RuvB-S). A head domain (RuvB-H) region spans residues 256–334 (DAGLDHVDHK…HLGIKRTGED (79 aa)). R311 and R316 together coordinate DNA.

This sequence belongs to the RuvB family. As to quaternary structure, homohexamer. Forms an RuvA(8)-RuvB(12)-Holliday junction (HJ) complex. HJ DNA is sandwiched between 2 RuvA tetramers; dsDNA enters through RuvA and exits via RuvB. An RuvB hexamer assembles on each DNA strand where it exits the tetramer. Each RuvB hexamer is contacted by two RuvA subunits (via domain III) on 2 adjacent RuvB subunits; this complex drives branch migration. In the full resolvosome a probable DNA-RuvA(4)-RuvB(12)-RuvC(2) complex forms which resolves the HJ.

Its subcellular location is the cytoplasm. The catalysed reaction is ATP + H2O = ADP + phosphate + H(+). The RuvA-RuvB-RuvC complex processes Holliday junction (HJ) DNA during genetic recombination and DNA repair, while the RuvA-RuvB complex plays an important role in the rescue of blocked DNA replication forks via replication fork reversal (RFR). RuvA specifically binds to HJ cruciform DNA, conferring on it an open structure. The RuvB hexamer acts as an ATP-dependent pump, pulling dsDNA into and through the RuvAB complex. RuvB forms 2 homohexamers on either side of HJ DNA bound by 1 or 2 RuvA tetramers; 4 subunits per hexamer contact DNA at a time. Coordinated motions by a converter formed by DNA-disengaged RuvB subunits stimulates ATP hydrolysis and nucleotide exchange. Immobilization of the converter enables RuvB to convert the ATP-contained energy into a lever motion, pulling 2 nucleotides of DNA out of the RuvA tetramer per ATP hydrolyzed, thus driving DNA branch migration. The RuvB motors rotate together with the DNA substrate, which together with the progressing nucleotide cycle form the mechanistic basis for DNA recombination by continuous HJ branch migration. Branch migration allows RuvC to scan DNA until it finds its consensus sequence, where it cleaves and resolves cruciform DNA. This Oceanobacillus iheyensis (strain DSM 14371 / CIP 107618 / JCM 11309 / KCTC 3954 / HTE831) protein is Holliday junction branch migration complex subunit RuvB.